A 141-amino-acid chain; its full sequence is Nucleoside diphosphate kinase (141 aa).

ATP-binding residues include Lys11, Phe59, Arg87, Thr93, Arg104, and Asn114. His117 (pros-phosphohistidine intermediate) is an active-site residue.

This sequence belongs to the NDK family. In terms of assembly, homotetramer. The cofactor is Mg(2+).

The protein resides in the cytoplasm. The catalysed reaction is a 2'-deoxyribonucleoside 5'-diphosphate + ATP = a 2'-deoxyribonucleoside 5'-triphosphate + ADP. It carries out the reaction a ribonucleoside 5'-diphosphate + ATP = a ribonucleoside 5'-triphosphate + ADP. In terms of biological role, major role in the synthesis of nucleoside triphosphates other than ATP. The ATP gamma phosphate is transferred to the NDP beta phosphate via a ping-pong mechanism, using a phosphorylated active-site intermediate. This Ralstonia pickettii (strain 12J) protein is Nucleoside diphosphate kinase.